We begin with the raw amino-acid sequence, 88 residues long: UPF0298 protein BC_3932 (88 aa).

The protein belongs to the UPF0298 family.

It localises to the cytoplasm. This chain is UPF0298 protein BC_3932, found in Bacillus cereus (strain ATCC 14579 / DSM 31 / CCUG 7414 / JCM 2152 / NBRC 15305 / NCIMB 9373 / NCTC 2599 / NRRL B-3711).